The following is a 463-amino-acid chain: Carnosine N-methyltransferase (463 aa).

2 disordered regions span residues 1–64 (MTKN…SQLK) and 79–104 (KHNH…EKEE). The segment covering 9–58 (KSNNSNISNNNNNNNNNNNNNNNNNNNNNNNNNNNNNNNNNNNNNNNNKN) has biased composition (low complexity). Over residues 79 to 93 (KHNHDHSHDHNHDYD) the composition is skewed to basic and acidic residues. The segment covering 94–103 (DNNEDDEEKE) has biased composition (acidic residues). S-adenosyl-L-methionine contacts are provided by Q215, R218, G260, E281, D351, F352, and C367. Residue D371 participates in carnosine binding. Residue Y379 coordinates S-adenosyl-L-methionine. Residues H402 and Y450 each contribute to the carnosine site.

Belongs to the carnosine N-methyltransferase family.

It carries out the reaction carnosine + S-adenosyl-L-methionine = anserine + S-adenosyl-L-homocysteine + H(+). Its function is as follows. N-methyltransferase that mediates the formation of anserine (beta-alanyl-N(Pi)-methyl-L-histidine) from carnosine. This Dictyostelium discoideum (Social amoeba) protein is Carnosine N-methyltransferase.